The chain runs to 873 residues: DNA mismatch repair protein MutS (873 aa).

625 to 632 (GPNMGGKS) is a binding site for ATP.

Belongs to the DNA mismatch repair MutS family.

This protein is involved in the repair of mismatches in DNA. It is possible that it carries out the mismatch recognition step. This protein has a weak ATPase activity. The polypeptide is DNA mismatch repair protein MutS (Xanthomonas campestris pv. campestris (strain 8004)).